The sequence spans 228 residues: Death domain-containing membrane protein NRADD (228 aa).

Topologically, residues 1-52 (MLHNVSKGVVYSDTALKGQDGDREGMWVGAGGALAPNTSSLFPPEPPGASSN) are extracellular. N-linked (GlcNAc...) asparagine glycosylation is found at Asn4 and Asn37. The chain crosses the membrane as a helical; Signal-anchor for type III membrane protein span at residues 53–73 (IIPVYCALLATVVLGLLAYVA). Residues 74-228 (FKCWRSRKQR…SSPAEGCSVV (155 aa)) lie on the Cytoplasmic side of the membrane. Residues 143 to 222 (EEVQRLLILG…DVVQVLSSPA (80 aa)) form the Death domain.

In terms of assembly, interacts with NTRK1. Isoform 1 and isoform 2 interact with NGFR. Interacts with SORT1. Isoform 1 is N-glycosylated. Isoform 2 is not N-glycosylated. As to expression, detected in embryo, including embryonic brain. Detected at very low levels in adult testis, spleen, thymus and lung.

It localises to the cell membrane. It is found in the nucleus. Modulates NTRK1 signaling. Can activate several intracellular signaling pathways, leading to activation of JUN. Promotes translocation of SORT1 to the cell membrane, and thereby hinders lysosomal degradation of SOTR1 and promotes its interaction with NGFR. Both isoform 1 and isoform 2 promote apoptosis. This is Death domain-containing membrane protein NRADD (Nradd) from Rattus norvegicus (Rat).